The following is a 347-amino-acid chain: Protein RecA (347 aa).

64–71 contributes to the ATP binding site; sequence GPESSGKT.

Belongs to the RecA family.

The protein resides in the cytoplasm. In terms of biological role, can catalyze the hydrolysis of ATP in the presence of single-stranded DNA, the ATP-dependent uptake of single-stranded DNA by duplex DNA, and the ATP-dependent hybridization of homologous single-stranded DNAs. It interacts with LexA causing its activation and leading to its autocatalytic cleavage. In Bacillus velezensis (strain DSM 23117 / BGSC 10A6 / LMG 26770 / FZB42) (Bacillus amyloliquefaciens subsp. plantarum), this protein is Protein RecA.